The chain runs to 202 residues: Securin (202 aa).

Residue alanine 2 is modified to N-acetylalanine. A disordered region spans residues 35 to 90; it reads LDGRSQVSTPRFGKTFDAPPALPKATRKALGTVNRATEKSVKTKGPLKQKQPSFSA. The short motif at 61 to 64 is the D-box element; sequence RKAL. 2 consecutive short sequence motifs (TEK-box) follow at residues 71 to 73 and 94 to 96; these read TEK. The short motif at 163–173 is the SH3-binding element; it reads PPSPVKMPSPP. Serine 165 is modified (phosphoserine; by CDK1).

Belongs to the securin family. In terms of assembly, interacts with RPS10 and DNAJA1. Interacts with the caspase-like ESPL1, and prevents its protease activity probably by covering its active site. Interacts with TP53 and blocks its activity probably by blocking its binding to DNA. Interacts with the Ku 70 kDa subunit of ds-DNA kinase. Interacts with PTTG1IP. Post-translationally, phosphorylated at Ser-165 by CDK1 during mitosis. In terms of processing, phosphorylated in vitro by ds-DNA kinase. Ubiquitinated through 'Lys-11' linkage of ubiquitin moieties by the anaphase promoting complex (APC) at the onset of anaphase, conducting to its degradation. 'Lys-11'-linked ubiquitination is mediated by the E2 ligase UBE2C/UBCH10. Expressed at low level in most tissues, except in adult testis, where it is highly expressed. Overexpressed in many patients suffering from pituitary adenomas, primary epithelial neoplasias, and esophageal cancer.

The protein localises to the cytoplasm. It is found in the nucleus. Regulatory protein, which plays a central role in chromosome stability, in the p53/TP53 pathway, and DNA repair. Probably acts by blocking the action of key proteins. During the mitosis, it blocks Separase/ESPL1 function, preventing the proteolysis of the cohesin complex and the subsequent segregation of the chromosomes. At the onset of anaphase, it is ubiquitinated, conducting to its destruction and to the liberation of ESPL1. Its function is however not limited to a blocking activity, since it is required to activate ESPL1. Negatively regulates the transcriptional activity and related apoptosis activity of TP53. The negative regulation of TP53 may explain the strong transforming capability of the protein when it is overexpressed. May also play a role in DNA repair via its interaction with Ku, possibly by connecting DNA damage-response pathways with sister chromatid separation. This is Securin (PTTG1) from Homo sapiens (Human).